The sequence spans 1737 residues: Complement C4 (1737 aa).

The signal sequence occupies residues 1 to 19; it reads MRLLWGLAWAFSFFASSLQ. C66 and C95 are disulfide-bonded. 2 N-linked (GlcNAc...) asparagine glycosylation sites follow: N224 and N664. A disulfide bond links C633 and C667. A propeptide spanning residues 674–677 is cleaved from the precursor; it reads RQKR. 3 disulfides stabilise this stretch: C700–C726, C701–C733, and C714–C734. Positions 700–734 constitute an Anaphylatoxin-like domain; the sequence is CCQDGMTKLPMARTCEQRAARVPQPACREPFLSCC. N-linked (GlcNAc...) asparagine glycosylation is present at N743. Residues 1005-1008 constitute a cross-link (isoglutamyl cysteine thioester (Cys-Gln)); that stretch reads CAEQ. 2 N-linked (GlcNAc...) asparagine glycosylation sites follow: N1323 and N1386. 3 positions are modified to sulfotyrosine: Y1412, Y1414, and Y1416. A propeptide spanning residues 1443 to 1446 is cleaved from the precursor; the sequence is RRRR. Disulfide bonds link C1464–C1528, C1576–C1581, C1588–C1666, C1611–C1735, and C1711–C1720. The NTR domain occupies 1588-1735; it reads CPRQRRSLER…FLQEYSSQGC (148 aa). Y1676 carries the post-translational modification Sulfotyrosine.

As to quaternary structure, in absence of complement activation, circulates in blood as a disulfide-linked trimer of an alpha, beta and gamma chain. In terms of assembly, complement C4b is composed of complement C4b-A, complement C4 beta and complement C4 gamma chains that are associated via disulfide bonds. Non-enzymatic component of the C3 convertase, also named C4bC2b, composed of the serine protease complement C2b (C2), as well as complement C4b. Non-enzymatic component of the C5 convertase, also named C4bC2bC3b, composed of the serine protease complement C2b (C2), complement C3b, as well as complement C4b. Post-translationally, prior to secretion, the single-chain precursor is enzymatically cleaved by plasminogen (PLG) to yield non-identical chains alpha, beta and gamma. During activation of the complement systems, the alpha chain is cleaved into C4a and C4b by different proteases depending on the complement pathway: C4b stays linked to the beta and gamma chains, while C4a is released in the plasma. The alpha chain is cleaved by C1S to generate C4a and C4b following activation by the classical complement system. The alpha chain is cleaved to generate C4a and C4b by MASP2 following activation by the lectin complement system. The alpha chain is cleaved by GZMK to generate C4a and C4b following activation by the GZMK complement system. Further degradation of C4b by C1 into the inactive fragments C4c and C4d blocks the generation of C3 convertase. The proteolytic cleavages often are incomplete so that many structural forms can be found in plasma. Upon activation, the internal thioester bond reacts with carbohydrate antigens on the target surface to form amide or ester bonds, leading to covalent association with the surface of pathogens. In terms of processing, complement C4b interacts with complement C3b via a thioester linkage. Post-translationally, N- and O-glycosylated. O-glycosylated with a core 1 or possibly core 8 glycan.

It is found in the secreted. The protein resides in the cell surface. Functionally, precursor of non-enzymatic components of the classical, lectin and GZMK complement pathways, which consist in a cascade of proteins that leads to phagocytosis and breakdown of pathogens and signaling that strengthens the adaptive immune system. Its function is as follows. Non-enzymatic component of C3 and C5 convertases. Generated following cleavage by complement proteases (C1S, MASP2 or GZMK, depending on the complement pathway), it covalently attaches to the surface of pathogens, where it acts as an opsonin that marks the surface of antigens for removal. It then recruits the serine protease complement C2b to form the C3 and C5 convertases, which cleave and activate C3 and C5, respectively, the next components of the complement pathways. Complement C4b-A isotype is responsible for effective binding to form amide bonds with immune aggregates or protein antigens, while complement C4b-B isotype catalyzes the transacylation of the thioester carbonyl group to form ester bonds with carbohydrate antigens. In terms of biological role, putative humoral mediator released following cleavage by complement proteases (C1S, MASP2 or GZMK, depending on the complement pathway). While it is strongly similar to anaphylatoxins, its role is unclear. Was reported to act as a mediator of local inflammatory process; however these effects were probably due to contamination with C3a and/C5a anaphylatoxins in biological assays. This Rattus norvegicus (Rat) protein is Complement C4.